Here is a 152-residue protein sequence, read N- to C-terminus: Regulatory protein RecX (152 aa).

It belongs to the RecX family.

The protein resides in the cytoplasm. In terms of biological role, modulates RecA activity. This Haemophilus influenzae (strain 86-028NP) protein is Regulatory protein RecX.